A 409-amino-acid polypeptide reads, in one-letter code: Nucleoprotein (409 aa).

4 disordered regions span residues 1 to 32 (MASG…SSGN), 46 to 69 (SPPL…QQHG), 120 to 193 (GADT…SGAE), and 238 to 259 (VDQV…DKMN). Over residues 15 to 31 (PVIKLGGPKPPKVGSSG) the composition is skewed to low complexity. Residues 29–160 (SSGNASWFQA…GNFRWDFIPL (132 aa)) are RNA-binding. The CoV N NTD domain maps to 31–156 (GNASWFQAIK…GGPDGNFRWD (126 aa)). Low complexity predominate over residues 162–179 (RGRSGKSTAASSAASSRA). 2 stretches are compositionally biased toward basic and acidic residues: residues 180 to 192 (PSRE…RSGA) and 247 to 259 (KGKE…DKMN). Ser190 is modified (phosphoserine; by host). The CoV N CTD domain maps to 215-331 (TKAKADEMAH…QCVDGVGTRP (117 aa)). Positions 226-333 (RYCKRTIPPG…VDGVGTRPKD (108 aa)) are dimerization. Cys320 and Cys323 are disulfide-bonded. A disordered region spans residues 327-409 (VGTRPKDDEP…GDSALGENEL (83 aa)). A compositionally biased stretch (low complexity) spans 341-354 (RSSSRPATRTSSPA). Basic residues predominate over residues 358 to 367 (PRPKKEKKTK). Residues 368-384 (KQDDEVDKALTSDEERN) are compositionally biased toward basic and acidic residues. Thr378 is subject to Phosphothreonine; by host. The residue at position 379 (Ser379) is a Phosphoserine; by host.

It belongs to the gammacoronavirus nucleocapsid protein family. Homooligomer. Both monomeric and oligomeric forms interact with RNA. Interacts with protein M. Interacts with NSP3; this interaction serves to tether the genome to the newly translated replicase-transcriptase complex at a very early stage of infection. Post-translationally, ADP-ribosylated. The ADP-ribosylation is retained in the virion during infection. In terms of processing, phosphorylated on serine and threonine residues.

It localises to the virion. The protein resides in the host endoplasmic reticulum-Golgi intermediate compartment. Its subcellular location is the host Golgi apparatus. Functionally, packages the positive strand viral genome RNA into a helical ribonucleocapsid (RNP) and plays a fundamental role during virion assembly through its interactions with the viral genome and membrane protein M. Plays an important role in enhancing the efficiency of subgenomic viral RNA transcription as well as viral replication. This Gallus gallus (Chicken) protein is Nucleoprotein.